A 156-amino-acid chain; its full sequence is Cytochrome c-type biogenesis protein CcmE 2 (156 aa).

At 1–8 (MNPQRRRR) the chain is on the cytoplasmic side. A helical; Signal-anchor for type II membrane protein transmembrane segment spans residues 9-29 (LWWVLALLLAGGLATTLVSMA). The Periplasmic portion of the chain corresponds to 30 to 156 (LQRNVAYLYT…AAANQGGALR (127 aa)). Heme contacts are provided by His-123 and Tyr-127. Positions 135–156 (KMGSAHRKHDVPAAANQGGALR) are disordered.

This sequence belongs to the CcmE/CycJ family.

It is found in the cell inner membrane. Heme chaperone required for the biogenesis of c-type cytochromes. Transiently binds heme delivered by CcmC and transfers the heme to apo-cytochromes in a process facilitated by CcmF and CcmH. The chain is Cytochrome c-type biogenesis protein CcmE 2 from Xanthomonas oryzae pv. oryzae (strain MAFF 311018).